Reading from the N-terminus, the 636-residue chain is Transcription termination factor FttA (636 aa).

The interval 3–70 (SEMLEEIKRT…IIIRSDRSVL (68 aa)) is KHa. Residues 71–138 (MDPEKAIRKI…WAPKILRTPP (68 aa)) form a KHb region. Residues 179 to 383 (WARLTAMGGF…LVMESTYGGH (205 aa)) form a metallo-beta-lactamase N-terminus region. Zn(2+) contacts are provided by His-242, His-244, Asp-246, His-247, His-329, and Asp-352. The tract at residues 384–577 (EDVQPSRNRA…MNIKTIEGFS (194 aa)) is beta-Casp. A metallo-beta-lactamase C-terminus region spans residues 578 to 636 (GHSDRRQLMEYVKRISPKPEKILLCHGDNYKTLDLASSIYRTYRIETKTPLNLETVRIQ). His-603 provides a ligand contact to Zn(2+).

This sequence belongs to the metallo-beta-lactamase superfamily. RNA-metabolizing metallo-beta-lactamase-like family. FttA subfamily. As to quaternary structure, homodimer. Interacts with RNA polymerase (RNAP), interacts with the Spt4-Spt5 complex. Does not seem to interact with the RNA degrading exosome. Zn(2+) is required as a cofactor.

Most active at 0.5 M or 0.7 M NaCl, less active at 1.0 M NaCl. Nuclease activity is inhibited by N,N,Tetrakis-(2-pyridylmethyl)-ethylene diamine (TPEN), a specific chelator of zinc ions. In terms of biological role, terminates transcription on the whole genome. Termination is linked to FttA-mediated RNA cleavage and does not require NTP hydrolysis. Cleaves endonucleolytically at the RNA exit channel of RNA polymerase (RNAP); the 5'-3' exonuclease activity of this protein degrades the nascent RNA released from RNAP. Its function is as follows. An RNA nuclease, it bind single-stranded RNA (ssRNA) with a preference for U-rich sequences. In Methanothermobacter thermautotrophicus (strain ATCC 29096 / DSM 1053 / JCM 10044 / NBRC 100330 / Delta H) (Methanobacterium thermoautotrophicum), this protein is Transcription termination factor FttA.